The chain runs to 319 residues: Taste receptor type 2 member 30 (319 aa).

Methionine 1 is a topological domain (extracellular). Residues 2–22 form a helical membrane-spanning segment; the sequence is ITFLPIIFSILIVVIFVIGNF. The Cytoplasmic portion of the chain corresponds to 23-46; that stretch reads ANGFIALVNSIEWVKRQKISFVDQ. The helical transmembrane segment at 47-67 threads the bilayer; it reads ILTALAVSRVGLLWVLLLHWY. At 68–86 the chain is on the extracellular side; sequence ATQLNPAFYSVEVRITAYN. A helical transmembrane segment spans residues 87–107; the sequence is VWAVTNHFSSWLATSLSMFYL. The Cytoplasmic portion of the chain corresponds to 108 to 126; it reads LRIANFSNLIFLRIKRRVK. Residues 127 to 147 traverse the membrane as a helical segment; sequence SVVLVILLGPLLFLVCHLFVI. Over 148 to 178 the chain is Extracellular; sequence NMDETVWTKEYEGNVTWKIKLRSAMYHSNMT. N-linked (GlcNAc...) asparagine glycans are attached at residues asparagine 161 and asparagine 176. A helical transmembrane segment spans residues 179 to 199; sequence LTMLANFVPLTLTLISFLLLI. At 200-229 the chain is on the cytoplasmic side; it reads CSLCKHLKKMQLHGKGSQDPSTKVHIKALQ. A helical membrane pass occupies residues 230–250; that stretch reads TVTSFLLLCAIYFLSMIISVC. Residues 251–259 lie on the Extracellular side of the membrane; the sequence is NFGRLEKQP. A helical membrane pass occupies residues 260 to 280; it reads VFMFCQAIIFSYPSTHPFILI. At 281–319 the chain is on the cytoplasmic side; that stretch reads LGNKKLKQIFLSVLRHVRYWVKDRSLRLHRFTRGALCVF.

It belongs to the G-protein coupled receptor T2R family. Expressed in subsets of taste receptor cells of the tongue and exclusively in gustducin-positive cells.

It is found in the membrane. Receptor that may play a role in the perception of bitterness and is gustducin-linked. May play a role in sensing the chemical composition of the gastrointestinal content. The activity of this receptor may stimulate alpha gustducin, mediate PLC-beta-2 activation and lead to the gating of TRPM5. This chain is Taste receptor type 2 member 30 (TAS2R30), found in Homo sapiens (Human).